Reading from the N-terminus, the 931-residue chain is Protocadherin gamma-A4 (931 aa).

The N-terminal stretch at 1 to 28 (MAAPPARPDHTRLLHICLLLGVLVEIRA) is a signal peptide. 6 Cadherin domains span residues 29-133 (EQIR…PPSF), 134-242 (GTEQ…APVF), 243-347 (TQPE…APEV), 348-452 (TVTS…PPTF), 453-567 (PHAS…YPTF), and 570-682 (DDST…KPSA). Residues 29 to 692 (EQIRYSVFEE…DPDDSGLTLY (664 aa)) are Extracellular-facing. 2 N-linked (GlcNAc...) asparagine glycosylation sites follow: N419 and N545. A helical transmembrane segment spans residues 693–713 (LVVSVAAVSCVFLAFVTVLLA). The Cytoplasmic segment spans residues 714-931 (LKLRRWHKSR…KKKSGKKEKK (218 aa)). 2 disordered regions span residues 801–840 (KGDP…WPNN) and 901–931 (ATLT…KEKK). The segment covering 805–840 (NLQQAPPNTDWRFSQAQRPGTSGSQNGDDTGTWPNN) has biased composition (polar residues). Residues 921–931 (NKKKSGKKEKK) show a composition bias toward basic residues.

Its subcellular location is the cell membrane. Its function is as follows. Potential calcium-dependent cell-adhesion protein. May be involved in the establishment and maintenance of specific neuronal connections in the brain. This chain is Protocadherin gamma-A4 (PCDHGA4), found in Pan troglodytes (Chimpanzee).